Reading from the N-terminus, the 630-residue chain is Alpha-1,3-mannosyltransferase MNT3 (630 aa).

The Cytoplasmic portion of the chain corresponds to 1–14 (MLKSLKSRRLILKR). The chain crosses the membrane as a helical; Signal-anchor for type II membrane protein span at residues 15–31 (LVTLLLSLFFSYLIFSA). Over 32-630 (SRNVTSSNKL…NDISRTWNAN (599 aa)) the chain is Lumenal. Asn-34 and Asn-168 each carry an N-linked (GlcNAc...) asparagine glycan.

Belongs to the MNN1/MNT family.

It is found in the golgi apparatus membrane. It participates in protein modification; protein glycosylation. Functionally, mannosyltransferase involved in adding the 4th and 5th mannose residues of O-linked glycans. The polypeptide is Alpha-1,3-mannosyltransferase MNT3 (MNT3) (Saccharomyces cerevisiae (strain ATCC 204508 / S288c) (Baker's yeast)).